The sequence spans 99 residues: Small ribosomal subunit protein eS24 (99 aa).

Belongs to the eukaryotic ribosomal protein eS24 family.

In Pyrococcus horikoshii (strain ATCC 700860 / DSM 12428 / JCM 9974 / NBRC 100139 / OT-3), this protein is Small ribosomal subunit protein eS24.